We begin with the raw amino-acid sequence, 258 residues long: Heat-labile enterotoxin A chain (258 aa).

A signal peptide spans Met1–Ala18. Residue Arg25 to Gly39 participates in NAD(+) binding. Residue Glu128 is part of the active site. Residues Cys205 and Cys217 are joined by a disulfide bond.

The protein belongs to the enterotoxin A family. Heterohexamer of one A chain and of five B chains.

Functionally, the biological activity of the toxin is produced by the A chain, which activates intracellular adenyl cyclase. The polypeptide is Heat-labile enterotoxin A chain (eltA) (Escherichia coli O78:H11 (strain H10407 / ETEC)).